Reading from the N-terminus, the 402-residue chain is 4-hydroxy-3-methylbut-2-enyl diphosphate reductase (402 aa).

Cys-66 provides a ligand contact to [4Fe-4S] cluster. Residue His-96 coordinates (2E)-4-hydroxy-3-methylbut-2-enyl diphosphate. A dimethylallyl diphosphate-binding site is contributed by His-96. An isopentenyl diphosphate-binding site is contributed by His-96. Residue Cys-157 coordinates [4Fe-4S] cluster. (2E)-4-hydroxy-3-methylbut-2-enyl diphosphate is bound at residue His-185. His-185 contacts dimethylallyl diphosphate. An isopentenyl diphosphate-binding site is contributed by His-185. The active-site Proton donor is the Glu-187. Thr-250 is a binding site for (2E)-4-hydroxy-3-methylbut-2-enyl diphosphate. Position 288 (Cys-288) interacts with [4Fe-4S] cluster. The (2E)-4-hydroxy-3-methylbut-2-enyl diphosphate site is built by Ser-317, Ser-318, Asn-319, and Ser-379. Ser-317, Ser-318, Asn-319, and Ser-379 together coordinate dimethylallyl diphosphate. Isopentenyl diphosphate contacts are provided by Ser-317, Ser-318, Asn-319, and Ser-379.

The protein belongs to the IspH family. [4Fe-4S] cluster is required as a cofactor.

It catalyses the reaction isopentenyl diphosphate + 2 oxidized [2Fe-2S]-[ferredoxin] + H2O = (2E)-4-hydroxy-3-methylbut-2-enyl diphosphate + 2 reduced [2Fe-2S]-[ferredoxin] + 2 H(+). The enzyme catalyses dimethylallyl diphosphate + 2 oxidized [2Fe-2S]-[ferredoxin] + H2O = (2E)-4-hydroxy-3-methylbut-2-enyl diphosphate + 2 reduced [2Fe-2S]-[ferredoxin] + 2 H(+). Its pathway is isoprenoid biosynthesis; dimethylallyl diphosphate biosynthesis; dimethylallyl diphosphate from (2E)-4-hydroxy-3-methylbutenyl diphosphate: step 1/1. The protein operates within isoprenoid biosynthesis; isopentenyl diphosphate biosynthesis via DXP pathway; isopentenyl diphosphate from 1-deoxy-D-xylulose 5-phosphate: step 6/6. Functionally, catalyzes the conversion of 1-hydroxy-2-methyl-2-(E)-butenyl 4-diphosphate (HMBPP) into a mixture of isopentenyl diphosphate (IPP) and dimethylallyl diphosphate (DMAPP). Acts in the terminal step of the DOXP/MEP pathway for isoprenoid precursor biosynthesis. In Nostoc punctiforme (strain ATCC 29133 / PCC 73102), this protein is 4-hydroxy-3-methylbut-2-enyl diphosphate reductase.